A 582-amino-acid polypeptide reads, in one-letter code: WD repeat-containing protein JIP5 (582 aa).

WD repeat units lie at residues Lys27 to Ser68, Arg125 to Lys168, Asp177 to Leu216, Asp265 to Gln310, and Gly373 to Asp410. 2 disordered regions span residues Glu405–Leu496 and Thr531–Leu582. Composition is skewed to acidic residues over residues Asp410–Val438 and Glu447–Thr485. 2 stretches are compositionally biased toward basic and acidic residues: residues Thr531 to Asp540 and Gln570 to Leu582.

It belongs to the WD repeat WDR55 family.

It localises to the nucleus. Its subcellular location is the nucleolus. This Debaryomyces hansenii (strain ATCC 36239 / CBS 767 / BCRC 21394 / JCM 1990 / NBRC 0083 / IGC 2968) (Yeast) protein is WD repeat-containing protein JIP5 (JIP5).